A 234-amino-acid polypeptide reads, in one-letter code: Pepsin inhibitor Dit33 (234 aa).

Positions 1–17 (MKILFCFVLLAIAALRA) are cleaved as a signal peptide. C135 and C230 are oxidised to a cystine. Residues 200–222 (RHETSSQPSDATTISTTTQAPVE) are disordered. Residues 204–219 (SSQPSDATTISTTTQA) are compositionally biased toward polar residues.

This sequence belongs to the protease inhibitor I33 family.

The protein localises to the secreted. Aspartyl protease inhibitor. The sequence is that of Pepsin inhibitor Dit33 (DIT33) from Dirofilaria immitis (Canine heartworm).